Reading from the N-terminus, the 159-residue chain is Putative esterase DR_2406 (159 aa).

This sequence belongs to the thioesterase PaaI family.

The polypeptide is Putative esterase DR_2406 (Deinococcus radiodurans (strain ATCC 13939 / DSM 20539 / JCM 16871 / CCUG 27074 / LMG 4051 / NBRC 15346 / NCIMB 9279 / VKM B-1422 / R1)).